We begin with the raw amino-acid sequence, 427 residues long: tRNA(Ile)-lysidine synthase (427 aa).

29–34 is an ATP binding site; that stretch reads SGGVDS.

This sequence belongs to the tRNA(Ile)-lysidine synthase family.

It localises to the cytoplasm. The enzyme catalyses cytidine(34) in tRNA(Ile2) + L-lysine + ATP = lysidine(34) in tRNA(Ile2) + AMP + diphosphate + H(+). Its function is as follows. Ligates lysine onto the cytidine present at position 34 of the AUA codon-specific tRNA(Ile) that contains the anticodon CAU, in an ATP-dependent manner. Cytidine is converted to lysidine, thus changing the amino acid specificity of the tRNA from methionine to isoleucine. The polypeptide is tRNA(Ile)-lysidine synthase (Thermosipho africanus (strain TCF52B)).